The following is a 223-amino-acid chain: Ubiquitin-conjugating enzyme E2 S-A (223 aa).

The UBC core domain occupies 11 to 157 (HIIRLVYKEV…ARLLTEIHGG (147 aa)). The active-site Glycyl thioester intermediate is the cysteine 95. Residues 170 to 223 (QDLASGASASSADPMIPGVLGGAEGPMAKKHAGERDKKLAAKKKLDKKRALRRL) form a disordered region. Over residues 209 to 223 (AAKKKLDKKRALRRL) the composition is skewed to basic residues.

Belongs to the ubiquitin-conjugating enzyme family.

It carries out the reaction S-ubiquitinyl-[E1 ubiquitin-activating enzyme]-L-cysteine + [E2 ubiquitin-conjugating enzyme]-L-cysteine = [E1 ubiquitin-activating enzyme]-L-cysteine + S-ubiquitinyl-[E2 ubiquitin-conjugating enzyme]-L-cysteine.. Its pathway is protein modification; protein ubiquitination. Its function is as follows. Catalyzes the covalent attachment of ubiquitin to other proteins. Acts as an essential factor of the anaphase promoting complex/cyclosome (APC/C), a cell cycle-regulated ubiquitin ligase that controls progression through mitosis. Acts by specifically elongating 'Lys-11'-linked polyubiquitin chains initiated by the E2 enzyme ube2c/ubch10 on APC/C substrates, enhancing the degradation of APC/C substrates by the proteasome and promoting mitotic exit. The chain is Ubiquitin-conjugating enzyme E2 S-A (ube2s-a) from Xenopus laevis (African clawed frog).